A 252-amino-acid polypeptide reads, in one-letter code: 2-C-methyl-D-erythritol 4-phosphate cytidylyltransferase (252 aa).

It belongs to the IspD/TarI cytidylyltransferase family. IspD subfamily.

It catalyses the reaction 2-C-methyl-D-erythritol 4-phosphate + CTP + H(+) = 4-CDP-2-C-methyl-D-erythritol + diphosphate. The protein operates within isoprenoid biosynthesis; isopentenyl diphosphate biosynthesis via DXP pathway; isopentenyl diphosphate from 1-deoxy-D-xylulose 5-phosphate: step 2/6. Functionally, catalyzes the formation of 4-diphosphocytidyl-2-C-methyl-D-erythritol from CTP and 2-C-methyl-D-erythritol 4-phosphate (MEP). This is 2-C-methyl-D-erythritol 4-phosphate cytidylyltransferase from Chlorobium phaeobacteroides (strain BS1).